A 125-amino-acid chain; its full sequence is Small ribosomal subunit protein uS12m (125 aa).

This sequence belongs to the universal ribosomal protein uS12 family.

It is found in the mitochondrion. Its function is as follows. Protein S12 is involved in the translation initiation step. This Helianthus annuus (Common sunflower) protein is Small ribosomal subunit protein uS12m (RPS12).